The following is a 124-amino-acid chain: UPF0102 protein TM1040_0449 (124 aa).

This sequence belongs to the UPF0102 family.

This Ruegeria sp. (strain TM1040) (Silicibacter sp.) protein is UPF0102 protein TM1040_0449.